Consider the following 171-residue polypeptide: Calcium channel flower homolog (171 aa).

Over 1–31 the chain is Cytoplasmic; it reads MSGSVAAGAAAGPVPPAQEEGMTWWYRWLCR. A helical transmembrane segment spans residues 32–52; sequence LAGVLGAVSCAISGLFNCVTI. Topologically, residues 53–56 are extracellular; that stretch reads HPLN. Residues 57–77 traverse the membrane as a helical segment; it reads IAAGVWMIMNAFILLLCEAPF. At 78-101 the chain is on the cytoplasmic side; that stretch reads CCQFVEFANTVAEKVDRLRSWQKA. A helical membrane pass occupies residues 102–122; the sequence is VFYCGMAIVPIVMSLTLTTLL. Residues 123–124 lie on the Extracellular side of the membrane; the sequence is GN. A helical transmembrane segment spans residues 125 to 141; it reads AIAFATGVLYGLSALGK. Topologically, residues 142–171 are cytoplasmic; it reads KGDAISYARIQQQRQQADEEKLAETFEGEL.

It belongs to the calcium channel flower family. As to quaternary structure, interacts with adaptor protein complex 2 (AP-2). In terms of tissue distribution, expressed in calyces in the brain (at protein level). Detected in cultured hippocampal neurons (at protein level).

The protein localises to the cell membrane. It localises to the cytoplasmic vesicle. It is found in the secretory vesicle. Its subcellular location is the synaptic vesicle. The protein resides in the golgi apparatus. The protein localises to the vesicle. In terms of biological role, transmembrane protein which mediates synaptic endocytosis and fitness-based cell culling. In response to different stimulus strengths, controls two major modes of synaptic vesicle (SV) retrieval in hippocampal neurons; Clathrin-mediated endocytosis (CME) in response to mild stimulation and activity-dependent bulk endocytosis (ADBE) in response to strong stimulation. In cytotoxic T-lymphoocytes (CTLs) facilitates calcium-dependent endocytosis of cytotoxic granules (CGs) at the immuno synapse. Different isoforms work as fitness fingerprints in 'loser' and 'winner' cells and thereby mediate win/lose decisions as part of the cell competition process. This is Calcium channel flower homolog (Cacfd1) from Rattus norvegicus (Rat).